Reading from the N-terminus, the 174-residue chain is uncharacterized protein (174 aa).

The tract at residues 1–55 (MGCVVSKSDDIKNENESRQRNQASSSQQPSSSQTPSKQIGIAAKDSEEQPQEVSY) is disordered. Gly2 carries the N-myristoyl glycine lipid modification. The segment covering 7-19 (KSDDIKNENESRQ) has biased composition (basic and acidic residues). The span at 20-38 (RNQASSSQQPSSSQTPSKQ) shows a compositional bias: low complexity.

This is an uncharacterized protein from Dictyostelium discoideum (Social amoeba).